We begin with the raw amino-acid sequence, 347 residues long: MSALGAVIALLLWGQLFAVDSGNDVMDISDDGCPKPPQIAHGYVEHSVRYQCKNYYRLRTEGDGVYTLNSEKQWINKAVGDKLPECEAVCGKPKNPANPVQRILGGHLDAKGSFPWQAKMVSRHNLTTGATLINEQWLLTTAKNLFLNHSENATAKDIAPTLTLYVGKKQLVEIEKVVLHPNYSQVDIGLIKLKQKVPVNERVMPICLPSKDYAEVGRVGYVSGWGRNANFKFTEHLKYVMLPVADQDQCVRHYEGSTVPEKKTPKSPVGVQPILNEHTFCAGMSKYQEDTCYGDAGSAFAVHDLEEDTWYAAGILSFDKSCAVAEYGVYVKVTSIQDWVQKTIAKN.

The signal sequence occupies residues 1–18 (MSALGAVIALLLWGQLFA). The region spanning 31–88 (DGCPKPPQIAHGYVEHSVRYQCKNYYRLRTEGDGVYTLNSEKQWINKAVGDKLPECEA) is the Sushi domain. 4 disulfide bridges follow: Cys-52–Cys-86, Cys-90–Cys-207, Cys-250–Cys-281, and Cys-292–Cys-322. The Peptidase S1 domain occupies 103 to 347 (ILGGHLDAKG…DWVQKTIAKN (245 aa)). 4 N-linked (GlcNAc...) asparagine glycosylation sites follow: Asn-125, Asn-148, Asn-152, and Asn-182. Residues 259–264 (VPEKKT) form an interaction with CD163 region.

The protein belongs to the peptidase S1 family. Tetramer of two alpha and two beta chains; disulfide-linked. The hemoglobin/haptoglobin complex is composed of a haptoglobin dimer bound to two hemoglobin alpha-beta dimers. Interacts with CD163. Interacts with ERGIC3.

The protein localises to the secreted. As a result of hemolysis, hemoglobin is found to accumulate in the kidney and is secreted in the urine. Haptoglobin captures, and combines with free plasma hemoglobin to allow hepatic recycling of heme iron and to prevent kidney damage. Haptoglobin also acts as an antioxidant, has antibacterial activity and plays a role in modulating many aspects of the acute phase response. Hemoglobin/haptoglobin complexes are rapidly cleared by the macrophage CD163 scavenger receptor expressed on the surface of liver Kupfer cells through an endocytic lysosomal degradation pathway. This is Haptoglobin (HP) from Pongo abelii (Sumatran orangutan).